Here is a 59-residue protein sequence, read N- to C-terminus: MAVPKRKTSPSKRGMRRSADALKAPTYIEDKNSGELRRPHHIDLKTGMYRGRSVLPAKD.

The segment covering methionine 1 to arginine 16 has biased composition (basic residues). The segment at methionine 1–histidine 41 is disordered. Positions isoleucine 28–histidine 41 are enriched in basic and acidic residues.

This sequence belongs to the bacterial ribosomal protein bL32 family.

This chain is Large ribosomal subunit protein bL32, found in Bartonella henselae (strain ATCC 49882 / DSM 28221 / CCUG 30454 / Houston 1) (Rochalimaea henselae).